We begin with the raw amino-acid sequence, 141 residues long: Hemoglobin subunit alpha-1/2/3 (141 aa).

The 141-residue stretch at 1–141 (VLSPADKTNV…VGTVLTSKYR (141 aa)) folds into the Globin domain. Position 3 is a phosphoserine (Ser-3). Lys-7 carries the N6-succinyllysine modification. The residue at position 8 (Thr-8) is a Phosphothreonine. Lys-11 carries the post-translational modification N6-succinyllysine. Lys-16 carries the N6-acetyllysine; alternate modification. At Lys-16 the chain carries N6-succinyllysine; alternate. Position 24 is a phosphotyrosine (Tyr-24). Residue Ser-35 is modified to Phosphoserine. Lys-40 carries the N6-succinyllysine modification. Ser-49 bears the Phosphoserine mark. Residue His-58 coordinates O2. His-87 contacts heme b. At Ser-102 the chain carries Phosphoserine. Thr-108 is modified (phosphothreonine). A phosphoserine mark is found at Ser-124 and Ser-131. 2 positions are modified to phosphothreonine: Thr-134 and Thr-137. A Phosphoserine modification is found at Ser-138.

It belongs to the globin family. In terms of assembly, heterotetramer of two alpha chains and two beta chains. As to expression, red blood cells.

In terms of biological role, involved in oxygen transport from the lung to the various peripheral tissues. The polypeptide is Hemoglobin subunit alpha-1/2/3 (Macaca nemestrina (Pig-tailed macaque)).